The chain runs to 287 residues: Homoserine kinase (287 aa).

79–89 (PLARGLGSSSS) provides a ligand contact to ATP.

This sequence belongs to the GHMP kinase family. Homoserine kinase subfamily.

The protein localises to the cytoplasm. The enzyme catalyses L-homoserine + ATP = O-phospho-L-homoserine + ADP + H(+). The protein operates within amino-acid biosynthesis; L-threonine biosynthesis; L-threonine from L-aspartate: step 4/5. Its function is as follows. Catalyzes the ATP-dependent phosphorylation of L-homoserine to L-homoserine phosphate. In Enterococcus faecalis (strain ATCC 700802 / V583), this protein is Homoserine kinase.